The sequence spans 226 residues: Uracil-DNA glycosylase (226 aa).

The active-site Proton acceptor is Asp-64.

This sequence belongs to the uracil-DNA glycosylase (UDG) superfamily. UNG family.

The protein localises to the cytoplasm. The catalysed reaction is Hydrolyzes single-stranded DNA or mismatched double-stranded DNA and polynucleotides, releasing free uracil.. In terms of biological role, excises uracil residues from the DNA which can arise as a result of misincorporation of dUMP residues by DNA polymerase or due to deamination of cytosine. The polypeptide is Uracil-DNA glycosylase (Vibrio vulnificus (strain CMCP6)).